Here is a 319-residue protein sequence, read N- to C-terminus: Cytochrome c biogenesis protein CcsA (319 aa).

Helical transmembrane passes span 14–34, 36–56, 69–89, 97–117, 142–162, 227–247, 254–274, and 288–308; these read AFGG…FPGI, GLNR…TLTL, SNLY…HLFI, LIGA…SLAL, IMML…LFLI, TIGL…VWAN, WSWD…AAYL, and AILA…VNFL.

It belongs to the CcmF/CycK/Ccl1/NrfE/CcsA family. May interact with Ccs1.

It is found in the plastid. The protein localises to the chloroplast thylakoid membrane. Its function is as follows. Required during biogenesis of c-type cytochromes (cytochrome c6 and cytochrome f) at the step of heme attachment. The sequence is that of Cytochrome c biogenesis protein CcsA from Pyropia yezoensis (Susabi-nori).